A 124-amino-acid polypeptide reads, in one-letter code: S-adenosylmethionine decarboxylase proenzyme (124 aa).

Serine 63 functions as the Schiff-base intermediate with substrate; via pyruvic acid in the catalytic mechanism. A Pyruvic acid (Ser); by autocatalysis modification is found at serine 63. Histidine 68 functions as the Proton acceptor; for processing activity in the catalytic mechanism. The active-site Proton donor; for catalytic activity is the cysteine 83.

It belongs to the prokaryotic AdoMetDC family. Type 1 subfamily. In terms of assembly, heterotetramer of two alpha and two beta chains arranged as a dimer of alpha/beta heterodimers. Pyruvate serves as cofactor. Post-translationally, is synthesized initially as an inactive proenzyme. Formation of the active enzyme involves a self-maturation process in which the active site pyruvoyl group is generated from an internal serine residue via an autocatalytic post-translational modification. Two non-identical subunits are generated from the proenzyme in this reaction, and the pyruvate is formed at the N-terminus of the alpha chain, which is derived from the carboxyl end of the proenzyme. The post-translation cleavage follows an unusual pathway, termed non-hydrolytic serinolysis, in which the side chain hydroxyl group of the serine supplies its oxygen atom to form the C-terminus of the beta chain, while the remainder of the serine residue undergoes an oxidative deamination to produce ammonia and the pyruvoyl group blocking the N-terminus of the alpha chain.

The catalysed reaction is S-adenosyl-L-methionine + H(+) = S-adenosyl 3-(methylsulfanyl)propylamine + CO2. Its pathway is amine and polyamine biosynthesis; S-adenosylmethioninamine biosynthesis; S-adenosylmethioninamine from S-adenosyl-L-methionine: step 1/1. Its function is as follows. Catalyzes the decarboxylation of S-adenosylmethionine to S-adenosylmethioninamine (dcAdoMet), the propylamine donor required for the synthesis of the polyamines spermine and spermidine from the diamine putrescine. This chain is S-adenosylmethionine decarboxylase proenzyme, found in Anoxybacillus flavithermus (strain DSM 21510 / WK1).